The sequence spans 485 residues: Probable cytosol aminopeptidase (485 aa).

Residues Lys251 and Asp256 each coordinate Mn(2+). Lys263 is an active-site residue. Residues Asp274, Asp333, and Glu335 each contribute to the Mn(2+) site. Arg337 is a catalytic residue.

Belongs to the peptidase M17 family. Requires Mn(2+) as cofactor.

It localises to the cytoplasm. The enzyme catalyses Release of an N-terminal amino acid, Xaa-|-Yaa-, in which Xaa is preferably Leu, but may be other amino acids including Pro although not Arg or Lys, and Yaa may be Pro. Amino acid amides and methyl esters are also readily hydrolyzed, but rates on arylamides are exceedingly low.. It catalyses the reaction Release of an N-terminal amino acid, preferentially leucine, but not glutamic or aspartic acids.. Presumably involved in the processing and regular turnover of intracellular proteins. Catalyzes the removal of unsubstituted N-terminal amino acids from various peptides. The polypeptide is Probable cytosol aminopeptidase (Brucella melitensis biotype 1 (strain ATCC 23456 / CCUG 17765 / NCTC 10094 / 16M)).